The primary structure comprises 61 residues: Metallothionein-1L (61 aa).

The tract at residues 1-29 (MDPNCSCATGGSCSCASSCKCKECKCTSC) is beta. The a divalent metal cation site is built by cysteine 5, cysteine 7, cysteine 13, cysteine 15, cysteine 19, cysteine 21, cysteine 24, cysteine 26, cysteine 29, cysteine 33, cysteine 34, cysteine 36, cysteine 37, cysteine 41, cysteine 44, cysteine 48, cysteine 50, cysteine 57, cysteine 59, and cysteine 60. The interval 30-61 (KKSCCSCCPMGCAKCAQGCVCKGASEKCSCCA) is alpha.

This sequence belongs to the metallothionein superfamily. Type 1 family. Monomer. In terms of tissue distribution, expressed in reticulocytes.

Functionally, metallothioneins have a high content of cysteine residues that bind various heavy metals; these proteins are transcriptionally regulated by both heavy metals and glucocorticoids. The chain is Metallothionein-1L (MT1L) from Homo sapiens (Human).